Here is a 215-residue protein sequence, read N- to C-terminus: Negative modulator of initiation of replication (215 aa).

The segment at 71-93 (AETPKPSSEQEIRTPARKQSTQS) is disordered. The tract at residues 181-187 (NTNSGRK) is interaction with DNA.

Belongs to the SeqA family. In terms of assembly, homodimer. Polymerizes to form helical filaments.

The protein resides in the cytoplasm. Negative regulator of replication initiation, which contributes to regulation of DNA replication and ensures that replication initiation occurs exactly once per chromosome per cell cycle. Binds to pairs of hemimethylated GATC sequences in the oriC region, thus preventing assembly of replication proteins and re-initiation at newly replicated origins. Repression is relieved when the region becomes fully methylated. The polypeptide is Negative modulator of initiation of replication (Mannheimia succiniciproducens (strain KCTC 0769BP / MBEL55E)).